The following is a 311-amino-acid chain: Progestin and adipoQ receptor family member 3 (311 aa).

The interval 1 to 20 (MHQKLLKSAHYIELGSYQYW) is required for interaction with SREBF2. Residues 1–73 (MHQKLLKSAH…FILSNETVNI (73 aa)) lie on the Cytoplasmic side of the membrane. The required for interaction with SCAP stretch occupies residues 41 to 60 (KDNPYITDGYRAYLPSRLCI). Residues 61 to 71 (KSLFILSNETV) are golgi targeting. Residues 74-96 (WSHLLGFFLFFTLGIYDMTSVLP) form a helical membrane-spanning segment. The Lumenal segment spans residues 97 to 105 (SASASREDF). Residues 106–128 (VICSICLFCFQVCMLCSVGYHLF) traverse the membrane as a helical segment. At 129-140 (SCHRSEKTCRRW) the chain is on the cytoplasmic side. The helical transmembrane segment at 141–163 (MALDYAGISIGILGCYVSGVFYA) threads the bilayer. The Lumenal segment spans residues 164–172 (FYCNNYWRQ). The helical transmembrane segment at 173–195 (VYLITVLAMILAVFFAQIHPNYL) threads the bilayer. At 196-201 (TQQWQR) the chain is on the cytoplasmic side. The helical transmembrane segment at 202–224 (LRSIIFCSVSGYGVIPTLHWVWL) threads the bilayer. The Lumenal portion of the chain corresponds to 225–238 (NGGIGAPIVQDFAP). A helical transmembrane segment spans residues 239–256 (RVIVMYMIALLAFLFYIS). The Cytoplasmic portion of the chain corresponds to 257–275 (KVPERYFPGQLNYLGSSHQ). A helical transmembrane segment spans residues 276 to 298 (IWHILAVVMLYWWHQSTVYVMQY). The tract at residues 299 to 303 (RHSKP) is golgi targeting. Residues 299-311 (RHSKPCPDYVSHL) are Lumenal-facing.

This sequence belongs to the ADIPOR family. As to quaternary structure, interacts with SCAP and SREBF2; the interactions are direct, increase in low cholesterol conditions and tether SCAP:SREBP complex to the Golgi apparatus. Interaction with SCAP is mutually exclusive with INSIG1. In hepatocytes, interacts with PPARA and HUWE1; the interactions promote PPARA poylubiquitination and HUWE1-mediated degradation. In macrophages, interacts with PPARG and STUB1; the interactions promote PPARG poylubiquitination and STUB1-mediated degradation. In terms of tissue distribution, widely expressed in a range of tissues.

It localises to the golgi apparatus membrane. Functionally, golgi-scaffold protein which modulates its interactors acitivies by anchoring them to the Golgi apparatus. Functions as a spatial regulator of RAF1 kinase by sequestrating it to the Golgi apparatus. Acts as a positive regulator of cholesterol biosynthesis by mediating the anchoring of the SCAP:SREBP complex in the Golgi apparatus, thereby promoting SCAP:SREBF2 complex formation, potentiating SREBF2 and SREBF1 processing and enhancing lipid synthesis. Also regulates PPARA and PPARG functions by mediating their interaction with E3 ubiquitin ligases, such as STUB1 or HUWE1, leading to their polyubiquitination and proteasome-mediated degradation. In Homo sapiens (Human), this protein is Progestin and adipoQ receptor family member 3.